Here is a 525-residue protein sequence, read N- to C-terminus: GMP synthase [glutamine-hydrolyzing] (525 aa).

In terms of domain architecture, Glutamine amidotransferase type-1 spans 9-207 (RILILDFGSQ…VRDICECEAL (199 aa)). Cysteine 86 functions as the Nucleophile in the catalytic mechanism. Residues histidine 181 and glutamate 183 contribute to the active site. In terms of domain architecture, GMPS ATP-PPase spans 208–400 (WTPAKIIDDA…LGLPYDMLYR (193 aa)). 235-241 (SGGVDSS) serves as a coordination point for ATP.

As to quaternary structure, homodimer.

The catalysed reaction is XMP + L-glutamine + ATP + H2O = GMP + L-glutamate + AMP + diphosphate + 2 H(+). It participates in purine metabolism; GMP biosynthesis; GMP from XMP (L-Gln route): step 1/1. Its function is as follows. Catalyzes the synthesis of GMP from XMP. In Cronobacter sakazakii (strain ATCC BAA-894) (Enterobacter sakazakii), this protein is GMP synthase [glutamine-hydrolyzing].